A 226-amino-acid chain; its full sequence is Triosephosphate isomerase (226 aa).

13 to 15 is a binding site for substrate; the sequence is NFK. Histidine 97 acts as the Electrophile in catalysis. The active-site Proton acceptor is the glutamate 145. Substrate contacts are provided by residues isoleucine 150, glycine 185, and 206–207; that span reads AS.

Belongs to the triosephosphate isomerase family. In terms of assembly, homotetramer; dimer of dimers.

Its subcellular location is the cytoplasm. It catalyses the reaction D-glyceraldehyde 3-phosphate = dihydroxyacetone phosphate. It functions in the pathway carbohydrate biosynthesis; gluconeogenesis. Its pathway is carbohydrate degradation; glycolysis; D-glyceraldehyde 3-phosphate from glycerone phosphate: step 1/1. Involved in the gluconeogenesis. Catalyzes stereospecifically the conversion of dihydroxyacetone phosphate (DHAP) to D-glyceraldehyde-3-phosphate (G3P). The chain is Triosephosphate isomerase from Methanobacterium bryantii.